The following is a 117-amino-acid chain: uncharacterized protein (117 aa).

An N-terminal signal peptide occupies residues Met-1–Ser-22.

This is an uncharacterized protein from Escherichia coli O6:H1 (strain CFT073 / ATCC 700928 / UPEC).